Here is an 86-residue protein sequence, read N- to C-terminus: Bacteriocin thailandicin (86 aa).

Positions Leu23–Trp86 form a cross-link, cyclopeptide (Leu-Trp).

The protein resides in the secreted. Cyclopeptide antibiotic with bacteriolytic activity against the Gram-positive bacteria S.aureus and S.thermophilus, and lower activity against the Gram-negative bacteria E.coli and P.aeruginosa. The protein is Bacteriocin thailandicin of Enterococcus thailandicus.